A 149-amino-acid polypeptide reads, in one-letter code: Ribonuclease VapC2 (149 aa).

Residues 11-149 form the PINc domain; it reads IFFDSNILIY…RVDFLEIIEI (139 aa). Positions 14 and 116 each coordinate Mg(2+).

This sequence belongs to the PINc/VapC protein family. Mg(2+) serves as cofactor.

Functionally, toxic component of a type II toxin-antitoxin (TA) system. An RNase. Its cognate antitoxin is VapB2. The sequence is that of Ribonuclease VapC2 from Methanocaldococcus jannaschii (strain ATCC 43067 / DSM 2661 / JAL-1 / JCM 10045 / NBRC 100440) (Methanococcus jannaschii).